A 131-amino-acid chain; its full sequence is Large ribosomal subunit protein bL17 (131 aa).

The protein belongs to the bacterial ribosomal protein bL17 family. As to quaternary structure, part of the 50S ribosomal subunit. Contacts protein L32.

The polypeptide is Large ribosomal subunit protein bL17 (Nitrosospira multiformis (strain ATCC 25196 / NCIMB 11849 / C 71)).